Reading from the N-terminus, the 616-residue chain is Chaperone protein HscA (616 aa).

It belongs to the heat shock protein 70 family.

Its function is as follows. Chaperone involved in the maturation of iron-sulfur cluster-containing proteins. Has a low intrinsic ATPase activity which is markedly stimulated by HscB. Involved in the maturation of IscU. The protein is Chaperone protein HscA of Klebsiella pneumoniae (strain 342).